The primary structure comprises 896 residues: Androgen receptor (896 aa).

The tract at residues M1–K534 is modulating. The interaction with ZNF318 stretch occupies residues M1–A563. Disordered stretches follow at residues Q35–L152 and L178–G218. Over residues L54–E78 the composition is skewed to low complexity. S65 is subject to Phosphoserine; by CDK9. S81 carries the post-translational modification Phosphoserine. A compositionally biased stretch (low complexity) spans L178–Q189. Polar residues predominate over residues E190–G199. Y215 bears the Phosphotyrosine; by CSK mark. Residue S248 is modified to Phosphoserine. Y259 carries the post-translational modification Phosphotyrosine; by CSK and TNK2. A phosphotyrosine; by CSK mark is found at Y299, Y338, Y349, and Y354. Y355 is modified (phosphotyrosine; by CSK and TNK2). A Glycyl lysine isopeptide (Lys-Gly) (interchain with G-Cter in SUMO) cross-link involves residue K378. Phosphotyrosine; by CSK is present on Y385. K497 is covalently cross-linked (Glycyl lysine isopeptide (Lys-Gly) (interchain with G-Cter in SUMO)). Residues Y511 and Y528 each carry the phosphotyrosine; by CSK modification. The interval Y528–T895 is interaction with LPXN. The nuclear receptor DNA-binding region spans T535 to L608. NR C4-type zinc fingers lie at residues C536–C556 and C572–C596. Residues Y548–V638 form an interaction with HIPK3 region. Residues Q568–T895 form an interaction with CCAR1 region. The interval M601 to T895 is interaction with KAT7. Residue S627 is modified to Phosphoserine; by STK4/MST1. Residues E645–I876 form the NR LBD domain. 17beta-hydroxy-5alpha-androstan-3-one contacts are provided by N682 and R729. Residues K822 and K824 each participate in a glycyl lysine isopeptide (Lys-Gly) (interchain with G-Cter in ubiquitin) cross-link. 17beta-hydroxy-5alpha-androstan-3-one is bound at residue T854. The residue at position 892 (Y892) is a Phosphotyrosine; by CSK.

The protein belongs to the nuclear hormone receptor family. NR3 subfamily. In terms of assembly, binds DNA as a homodimer. Part of a ternary complex containing AR, EFCAB6/DJBP and PARK7. Interacts with HIPK3 and NR0B2 in the presence of androgen. The ligand binding domain interacts with KAT7/HBO1 in the presence of dihydrotestosterone. Interacts with EFCAB6/DJBP, PQBP1, RANBP9, RBAK, SPDEF, SRA1, TGFB1I1 and RREB1. Interacts with ZMIZ1/ZIMP10 and ZMIZ2/ZMIP7 which both enhance its transactivation activity. Interacts with SLC30A9 and RAD54L2/ARIP4. Interacts with MACROD1 (via macro domain). Interacts via the ligand-binding domain with LXXLL and FXXLF motifs from NCOA1, NCOA2, NCOA3 and MAGEA11. Interacts (via nuclear receptor DNA binding domain and nuclear receptor ligand binding domain) with NCOA4. The AR N-terminal poly-Gln region binds Ran resulting in enhancement of AR-mediated transactivation. Ran-binding decreases as the poly-Gln length increases. Interacts with HIP1 (via coiled coil domain). Interacts (via ligand-binding domain) with TRIM68. Interacts with TNK2. Interacts with USP26. Interacts with RNF6. Interacts (regulated by RNF6 probably through polyubiquitination) with RNF14; regulates AR transcriptional activity. Interacts with PRMT2 and TRIM24. Interacts with RACK1. Interacts with RANBP10; this interaction enhances dihydrotestosterone-induced AR transcriptional activity. Interacts with PRPF6 in a hormone-independent way; this interaction enhances dihydrotestosterone-induced AR transcriptional activity. Interacts with STK4/MST1. Interacts with ZIPK/DAPK3. Interacts with LPXN. Interacts with MAK. Part of a complex containing AR, MAK and NCOA3. Interacts with CRY1. Interacts with CCAR1 and GATA2. Interacts with ZNF318. Interacts with BUD31. Interacts with ARID4A. Interacts with ARID4B. Interacts (via NR LBD domain) with ZBTB7A; the interaction is direct and androgen-dependent. Interacts with NCOR1. Interacts with NCOR2. Interacts with CRY2 in a ligand-dependent manner. Phosphorylated in prostate cancer cells in response to several growth factors including EGF. Phosphorylation is induced by c-Src kinase (CSK). Tyr-511 is one of the major phosphorylation sites and an increase in phosphorylation and Src kinase activity is associated with prostate cancer progression. Phosphorylation by TNK2 enhances the DNA-binding and transcriptional activity. Phosphorylation at Ser-65 by CDK9 regulates AR promoter selectivity and cell growth. Post-translationally, sumoylated on Lys-378 (major) and Lys-497. Ubiquitinated. Deubiquitinated by USP26. 'Lys-6' and 'Lys-27'-linked polyubiquitination by RNF6 modulates AR transcriptional activity and specificity. In terms of processing, palmitoylated by ZDHHC7 and ZDHHC21. Palmitoylation is required for plasma membrane targeting and for rapid intracellular signaling via ERK and AKT kinases and cAMP generation.

Its subcellular location is the nucleus. The protein localises to the cytoplasm. Its function is as follows. Steroid hormone receptors are ligand-activated transcription factors that regulate eukaryotic gene expression and affect cellular proliferation and differentiation in target tissues. Transcription factor activity is modulated by bound coactivator and corepressor proteins like ZBTB7A that recruits NCOR1 and NCOR2 to the androgen response elements/ARE on target genes, negatively regulating androgen receptor signaling and androgen-induced cell proliferation. Transcription activation is also down-regulated by NR0B2. Activated, but not phosphorylated, by HIPK3 and ZIPK/DAPK3. The protein is Androgen receptor (AR) of Sus scrofa (Pig).